A 971-amino-acid polypeptide reads, in one-letter code: Translation initiation factor IF-2 (971 aa).

The span at 48–63 (DHLRKSHGATDGDKRK) shows a compositional bias: basic and acidic residues. Disordered stretches follow at residues 48-86 (DHLR…ARTI) and 101-381 (DVAE…STFQ). Positions 105-114 (GADQGQAQVA) are enriched in low complexity. Residues 121–181 (ELKRREEEAR…EEEAATKRAA (61 aa)) are compositionally biased toward basic and acidic residues. Residues 182–203 (AEAAAAQQQAAAQQAAAEQEAT) are compositionally biased toward low complexity. The span at 210-261 (DEARAAAERAAQREAAKKAEDAAREAADKARAEQEEISKRRAAAEAEARAIR) shows a compositional bias: basic and acidic residues. Pro residues predominate over residues 277 to 286 (PPKPVEPPKP). Over residues 304-326 (ARPAVKKPAGAAAPATTQAPAGA) the composition is skewed to low complexity. Positions 356 to 369 (SSGGVDRGWRGGPK) are enriched in gly residues. The 170-residue stretch at 471–640 (PRPPVVTVMG…LLQAEVLELK (170 aa)) folds into the tr-type G domain. The segment at 480–487 (GHVDHGKT) is G1. 480 to 487 (GHVDHGKT) serves as a coordination point for GTP. The G2 stretch occupies residues 505–509 (GITQH). Residues 526 to 529 (DTPG) are G3. Residues 526-530 (DTPGH) and 580-583 (NKID) contribute to the GTP site. Residues 580-583 (NKID) form a G4 region. A G5 region spans residues 616 to 618 (SAK).

Belongs to the TRAFAC class translation factor GTPase superfamily. Classic translation factor GTPase family. IF-2 subfamily.

The protein localises to the cytoplasm. In terms of biological role, one of the essential components for the initiation of protein synthesis. Protects formylmethionyl-tRNA from spontaneous hydrolysis and promotes its binding to the 30S ribosomal subunits. Also involved in the hydrolysis of GTP during the formation of the 70S ribosomal complex. In Burkholderia orbicola (strain MC0-3), this protein is Translation initiation factor IF-2.